We begin with the raw amino-acid sequence, 392 residues long: MPNFKSKKIKEINLPYSKDDVEFLWFAKNDNVSLIYTKVQEESFFLQIKKAQNGFVIKGDKHTKPSKIGYLQKALKIFKEGFCEDIINEAFGLKNNALIEKTPFIVDNFDELLSKLQGKIYIEIGFGSGRHLLYQAKENPNVLILGVEIYNPALTQVAKLAKAQNVNNILLIQSDARLLLSVLKSKSVEKIFLHFPVPWGKKPHRRVIGKDFCKECARVLVQNGRFELRTDSFEYFNFTLEQFLTFPAPKFSLRKNENLEISSKYEDRWKKQEKNIYDLWVWNFNQECQNYELNEFNLSSVEFSKEDLKKIEQNFKNITIKKDDFFLHFESIYKQDENLLLKVAFGAFNKSEHCYLHLDKTIDFAFKEPFKIQENIKAINELKEILKVQFKI.

S-adenosyl-L-methionine is bound by residues E123, E148, and D175. 2 residues coordinate substrate: K201 and D231.

Belongs to the class I-like SAM-binding methyltransferase superfamily. TrmB family.

It carries out the reaction guanosine(46) in tRNA + S-adenosyl-L-methionine = N(7)-methylguanosine(46) in tRNA + S-adenosyl-L-homocysteine. The protein operates within tRNA modification; N(7)-methylguanine-tRNA biosynthesis. Catalyzes the formation of N(7)-methylguanine at position 46 (m7G46) in tRNA. The protein is tRNA (guanine-N(7)-)-methyltransferase of Campylobacter jejuni subsp. doylei (strain ATCC BAA-1458 / RM4099 / 269.97).